The chain runs to 405 residues: MRILTFTGKGGVGKTSVSAATAVRLSEMGHRTLVLSTDPAHSLSDSFNIQLGAEPTKIKENLHAIEVNPYVDLKQNWHSVQKYYTRIFMAQGVSGVMADEMTILPGMEELFSLLRIKRYKSAGLYDALVLDTAPTGETLRLLSLPDTLSWGMKAVKNVNKYIVRPLSKPLSKMSDKIAYYIPPEDAIESVDQVFDELEDIREILTDNVKSTVRLVMNAEKMSIKETMRALTYLNLYGFKVDMVLVNKLLDAQENSGYLEKWKGIQQKYLGEIEEGFSPLPVKKLKMYDQEIVGVKSLEVFAHDIYGDTDPSGMMYDEPPIKFVRQGDVYEVQLKLMFANPVDIDVWVTGDELFVQIGNQRKIITLPVSLTGLEPGDAVFKDKWLHIPFDLEKQGQHHRTREYNKA.

Position 8–15 (8–15 (GKGGVGKT)) interacts with ATP.

It belongs to the arsA ATPase family.

The enzyme catalyses arsenite(in) + ATP + H2O = arsenite(out) + ADP + phosphate + H(+). In terms of biological role, anion-transporting ATPase. Catalyzes the extrusion of arsenite. The polypeptide is Putative arsenical pump-driving ATPase (Chlorobaculum tepidum (strain ATCC 49652 / DSM 12025 / NBRC 103806 / TLS) (Chlorobium tepidum)).